Consider the following 131-residue polypeptide: Classical arabinogalactan protein 1 (131 aa).

The first 22 residues, 1–22 (MAFSKSLVFVLLAALLISSAVA), serve as a signal peptide directing secretion. Positions 22–110 (AQSPAPAPSN…APGPAQGGAV (89 aa)) are disordered. A compositionally biased stretch (pro residues) spans 50 to 60 (APAPEVSPSPS). The span at 61-72 (PAAALTPESSAS) shows a compositional bias: low complexity. Gly108 carries the GPI-anchor amidated glycine lipid modification. A propeptide spans 109–131 (AVSNKFASFGSVAVMLTAAVLVI) (removed in mature form).

This sequence belongs to the classical AGP family. Post-translationally, O-glycosylated on the hydroxyproline residues. Predominantly expressed in flowers and at a lower level in roots and leaves.

It is found in the cell membrane. Its function is as follows. Proteoglycan that seems to be implicated in diverse developmental roles such as differentiation, cell-cell recognition, embryogenesis and programmed cell death. The sequence is that of Classical arabinogalactan protein 1 (AGP1) from Arabidopsis thaliana (Mouse-ear cress).